The primary structure comprises 156 residues: Small ribosomal subunit protein uS7 (156 aa).

Belongs to the universal ribosomal protein uS7 family. Part of the 30S ribosomal subunit. Contacts proteins S9 and S11.

One of the primary rRNA binding proteins, it binds directly to 16S rRNA where it nucleates assembly of the head domain of the 30S subunit. Is located at the subunit interface close to the decoding center, probably blocks exit of the E-site tRNA. The sequence is that of Small ribosomal subunit protein uS7 from Dichelobacter nodosus (strain VCS1703A).